Consider the following 668-residue polypeptide: Putative ankyrin repeat protein FPV244 (668 aa).

ANK repeat units follow at residues 40–69 (IPFTAIHQALQLRQIDIVKELIQQNPKLIY), 144–173 (EYMKLIKERIQQDELLIAEMLLKKGIDVNA), 177–206 (YCRTPIHYAAERGNTKMVNLLLSYGADVNI), 210–239 (DDLSVLEYAVDSKNIDTIKAIIDNRSNINK), 272–302 (YKNTPLHYAVQAPSLSRLVPKLLERGIDVNA), 306–336 (KGETPLYLMAKNGYDTENIRTLIMRGADVNA), 340–370 (LYITPLHQASTLDRYKDTVITLLELGANVNA), 374–403 (CDKTPIHYAAVRNNVVIINTLLDYGADIEA), 407–437 (KIGTVLHFALYGTNPYMSVKTLIDRGANVNS), 441–471 (YLSTPLHYACKKNCKPEVIKMLLDNGADVNA), 473–502 (NIRNQYPLLIALEYHGIVNILLHYGAELRD), and 571–602 (NMFYSLDIFVISKNMNLLHHLVNNPIIKEINT).

This chain is Putative ankyrin repeat protein FPV244, found in Vertebrata (FPV).